We begin with the raw amino-acid sequence, 55 residues long: Large ribosomal subunit protein bL33 (55 aa).

Residues 1-11 (MAKGGREKIKL) are compositionally biased toward basic and acidic residues. The segment at 1 to 29 (MAKGGREKIKLESSAGTGHFYTTSKNKRT) is disordered. Over residues 14–24 (SAGTGHFYTTS) the composition is skewed to polar residues.

This sequence belongs to the bacterial ribosomal protein bL33 family.

The protein is Large ribosomal subunit protein bL33 of Polynucleobacter asymbioticus (strain DSM 18221 / CIP 109841 / QLW-P1DMWA-1) (Polynucleobacter necessarius subsp. asymbioticus).